Reading from the N-terminus, the 407-residue chain is MMEKHYVGSEIGQLRSVMLHRPNLSLKRLTPSNCQELLFDDVLSVERAGEEHDIFANTLRQQGIEVLLLTDLLTQTLDIPEAKSWLLETQISDYRLGPTFATDVRTWLAEMSHRDLARHLSGGLTYSEIPASIKNMVVDTHDINDFIMKPLPNHLFTRDTSCWIYNGVSINPMAKPARQRETNNLRAIYRWHPQFAGGEFIKYFGDENINYDHATLEGGDVLVIGRGAVLIGMSERTTPQGVEFLAQALFKHRQAERVIAVELPKHRSCMHLDTVMTHIDIDTFSVYPEVVRPDVNCWTLTPDGHGGLKRTQESTLLHAIEKALGIDQVRLITTGGDAFEAEREQWNDANNVLTLRPGVVVGYERNIWTNEKYDKAGITVLPIPGDELGRGRGGARCMSCPLHRDGI.

Cys397 serves as the catalytic Amidino-cysteine intermediate.

The protein belongs to the arginine deiminase family.

The protein localises to the cytoplasm. It carries out the reaction L-arginine + H2O = L-citrulline + NH4(+). It participates in amino-acid degradation; L-arginine degradation via ADI pathway; carbamoyl phosphate from L-arginine: step 1/2. The sequence is that of Arginine deiminase from Escherichia coli O81 (strain ED1a).